A 308-amino-acid chain; its full sequence is Aspartate carbamoyltransferase catalytic subunit (308 aa).

Residues R51 and T52 each contribute to the carbamoyl phosphate site. L-aspartate is bound at residue K79. Carbamoyl phosphate-binding residues include R101, H130, and Q133. R163 and R215 together coordinate L-aspartate. The carbamoyl phosphate site is built by A258 and P259.

The protein belongs to the aspartate/ornithine carbamoyltransferase superfamily. ATCase family. In terms of assembly, heterododecamer (2C3:3R2) of six catalytic PyrB chains organized as two trimers (C3), and six regulatory PyrI chains organized as three dimers (R2).

The enzyme catalyses carbamoyl phosphate + L-aspartate = N-carbamoyl-L-aspartate + phosphate + H(+). Its pathway is pyrimidine metabolism; UMP biosynthesis via de novo pathway; (S)-dihydroorotate from bicarbonate: step 2/3. Its function is as follows. Catalyzes the condensation of carbamoyl phosphate and aspartate to form carbamoyl aspartate and inorganic phosphate, the committed step in the de novo pyrimidine nucleotide biosynthesis pathway. This Pediococcus pentosaceus (strain ATCC 25745 / CCUG 21536 / LMG 10740 / 183-1w) protein is Aspartate carbamoyltransferase catalytic subunit.